The following is a 287-amino-acid chain: 2-dehydro-3-deoxyphosphooctonate aldolase (287 aa).

Belongs to the KdsA family.

It is found in the cytoplasm. The catalysed reaction is D-arabinose 5-phosphate + phosphoenolpyruvate + H2O = 3-deoxy-alpha-D-manno-2-octulosonate-8-phosphate + phosphate. The protein operates within carbohydrate biosynthesis; 3-deoxy-D-manno-octulosonate biosynthesis; 3-deoxy-D-manno-octulosonate from D-ribulose 5-phosphate: step 2/3. Its pathway is bacterial outer membrane biogenesis; lipopolysaccharide biosynthesis. The protein is 2-dehydro-3-deoxyphosphooctonate aldolase of Rhodopseudomonas palustris (strain ATCC BAA-98 / CGA009).